A 792-amino-acid polypeptide reads, in one-letter code: Host cell factor 2 (792 aa).

4 Kelch repeats span residues 34 to 79, 83 to 130, 207 to 255, and 257 to 303; these read LMII…GFVC, RILV…RLGH, KMYV…VIGN, and MYIF…VSDS. In terms of domain architecture, Fibronectin type-III 1 spans 359-449; it reads APSQVQLIKA…QPATKETSMK (91 aa). Residues 399–447 form a disordered region; it reads ASSDSSAAPNMQGVRMDPHRQGSNNIVPNSINDTINSTKTEQPATKETS. The span at 419–445 shows a compositional bias: polar residues; that stretch reads QGSNNIVPNSINDTINSTKTEQPATKE. K553 is covalently cross-linked (Glycyl lysine isopeptide (Lys-Gly) (interchain with G-Cter in SUMO2)). Fibronectin type-III domains follow at residues 583–675 and 677–787; these read TPSN…TCIP and FPGA…GNNK.

In terms of assembly, binds KMT2A/MLL1. Component of the MLL1/MLL complex, at least composed of KMT2A/MLL1, ASH2L, RBBP5, DPY30, WDR5, MEN1, HCFC1 and HCFC2. Interacts with TASOR. As to expression, highly expressed in testis. Detected at lower levels in spleen, thymus, prostate, ovary, small intestine and colon.

The protein resides in the cytoplasm. It localises to the nucleus. The protein is Host cell factor 2 (HCFC2) of Homo sapiens (Human).